Here is a 481-residue protein sequence, read N- to C-terminus: Phosphoglucosamine mutase (481 aa).

Ser-129 serves as the catalytic Phosphoserine intermediate. Mg(2+)-binding residues include Ser-129, Asp-271, Asp-273, and Asp-275. Ser-129 carries the post-translational modification Phosphoserine.

This sequence belongs to the phosphohexose mutase family. Mg(2+) serves as cofactor. In terms of processing, activated by phosphorylation.

It carries out the reaction alpha-D-glucosamine 1-phosphate = D-glucosamine 6-phosphate. Catalyzes the conversion of glucosamine-6-phosphate to glucosamine-1-phosphate. The polypeptide is Phosphoglucosamine mutase (Picosynechococcus sp. (strain ATCC 27264 / PCC 7002 / PR-6) (Agmenellum quadruplicatum)).